Here is a 1027-residue protein sequence, read N- to C-terminus: Translation initiation factor IF-2 (1027 aa).

Residues 31-433 (YVKSASSTVE…GGVRLPRGNG (403 aa)) form a disordered region. Residues 57–68 (KKGGGDSNGRAG) show a composition bias toward gly residues. Pro residues predominate over residues 110–122 (GPKPGPKPGPKAP). Residues 123–145 (APETKPFEEAPAPAAKADAPAQP) are compositionally biased toward low complexity. Positions 148–171 (EQPRSEQPRSEQPRSEQPRSERSG) are enriched in basic and acidic residues. 2 stretches are compositionally biased toward pro residues: residues 174–188 (PGGP…PKPG) and 201–212 (PPKPQSPKPGPR). The span at 237–268 (PGGGQRQGGQGPGRGGPQGGRPDRQGGGGQGA) shows a compositional bias: gly residues. Residues 293–302 (GMMPPRPNPG) show a composition bias toward pro residues. The segment covering 311–397 (SGGGPGGGRG…GAAGAFGRPG (87 aa)) has biased composition (gly residues). Positions 401 to 410 (RRGRKSKRQK) are enriched in basic residues. Residues 523 to 695 (SRPPVVTVMG…ILLTADATLD (173 aa)) form the tr-type G domain. Residues 532–539 (GHVDHGKT) form a G1 region. Residue 532–539 (GHVDHGKT) participates in GTP binding. Positions 557–561 (GITQH) are G2. The tract at residues 582–585 (DTPG) is G3. GTP-binding positions include 582–586 (DTPGH) and 636–639 (NKID). Positions 636–639 (NKID) are G4. Residues 672 to 674 (SAR) are G5.

This sequence belongs to the TRAFAC class translation factor GTPase superfamily. Classic translation factor GTPase family. IF-2 subfamily.

Its subcellular location is the cytoplasm. One of the essential components for the initiation of protein synthesis. Protects formylmethionyl-tRNA from spontaneous hydrolysis and promotes its binding to the 30S ribosomal subunits. Also involved in the hydrolysis of GTP during the formation of the 70S ribosomal complex. In Saccharopolyspora erythraea (strain ATCC 11635 / DSM 40517 / JCM 4748 / NBRC 13426 / NCIMB 8594 / NRRL 2338), this protein is Translation initiation factor IF-2.